We begin with the raw amino-acid sequence, 614 residues long: Chaperone protein DnaK (614 aa).

Phosphothreonine; by autocatalysis is present on Thr-175. Positions 577–614 (QAGGAEGAADPNAAAGGAQSAPHDDNVVDADFKVDEDK) are disordered. Positions 583-597 (GAADPNAAAGGAQSA) are enriched in low complexity. The segment covering 598–614 (PHDDNVVDADFKVDEDK) has biased composition (basic and acidic residues).

The protein belongs to the heat shock protein 70 family.

Functionally, acts as a chaperone. In Clostridium beijerinckii (strain ATCC 51743 / NCIMB 8052) (Clostridium acetobutylicum), this protein is Chaperone protein DnaK.